The sequence spans 42 residues: Pelovaterin (42 aa).

Disulfide bonds link Cys-8-Cys-38, Cys-16-Cys-32, and Cys-24-Cys-39.

The protein localises to the secreted. It is found in the extracellular space. It localises to the extracellular matrix. Functionally, induces the nucleation and stabilization of vaterite, one of the crystalline polymorphs of calcium carbonate. Exhibits strong antimicrobial activity against Pseudomonas aeruginosa and Proteus vulgaris. This is Pelovaterin from Pelodiscus sinensis (Chinese softshell turtle).